An 89-amino-acid polypeptide reads, in one-letter code: Small ribosomal subunit protein uS15 (89 aa).

The protein belongs to the universal ribosomal protein uS15 family. In terms of assembly, part of the 30S ribosomal subunit. Forms a bridge to the 50S subunit in the 70S ribosome, contacting the 23S rRNA.

Its function is as follows. One of the primary rRNA binding proteins, it binds directly to 16S rRNA where it helps nucleate assembly of the platform of the 30S subunit by binding and bridging several RNA helices of the 16S rRNA. Functionally, forms an intersubunit bridge (bridge B4) with the 23S rRNA of the 50S subunit in the ribosome. In Shewanella woodyi (strain ATCC 51908 / MS32), this protein is Small ribosomal subunit protein uS15.